The following is a 1034-amino-acid chain: MLLLLLLLKISTFVDSFQIGHLEFENSNETRILEICMKNAGSWRDHRLISLPSCHNFNGLENAANLNYQYSVDLLIGAACDEETQTVSRLALRWHKLYLSSAPLSTKEKESTTIALKPHSLAGTAEVILAMCKSMKWKEIGIIYSEETKYTAHAIYDMLAEQEDDLKINVFLETDGLSNTYTILHSARALISFLTTLDLSKFFKTLKENAFRPLEFSIVHVDCNKSEISNFYTYLDNNAGEEPNPISAARLRKLYRHVALLKNSHDDMEKTEEFAKKYGLVPSYTLYKALILCDGLQLLNNYTAPRGNLSIVQQLPYLWNHVTNTETQGYSGPVFIGNDGVRLPYYEMHMWRDGKAVHVANVKPRESDYCGGNMTKNCYEFLPSSPLLEDLPPYTSDCGYDNNLCSDFHVFMIAAIVFSILLIPMAIAFYLQRKEHLIQQMPWRVPLDSISFDDNGGSLSASRRVSTISTARASYSSIFSGNVAEHAIVNKQKVSVKRHVQRRAITFSRQEMEMLNQLKYMSHTNINPFTGICFNQGSELIVMWQFTTRYSLEDLIFVKEQKFGRNFQSTFIKHIVHGINYIHNSSIKVHGALYLSNCVVDSYWVVKLTDFGIKGILKERTNHKELAPSSAFDVDAIHYKYLQLAPEHISAILEKLEEPRGTVEGDIYQLAMCIYQILFYMRPFAERQESIKELAHLLSSQSTAPLHPKVPEGNSFTMRLLSIIQQCWLYKPAARPALIKITDAVNREFGQDVKGTLIDQMIEMIDEYSANLEQIVAERTRELEQDMSVTENLLYQLLPKSVADSIRSGKTVVPEQHSSVTLLVVDVCQFTKFCEAFIPVHILETLQELYSSFDNIVQKNKAFKVENVGDAYLICSGIPEMSGFRHLREICKISLKLQAFMKTFKVRHRPSHTLQIKMGITSGAVAAGILGSTAPRFCIFGDTVNMACRMASTGNPGSIQLSELTANTLMEKFPSFMLEERGMIDVKGKGACLTFWLTGEKDIMRRQSSRSSCISQIKFELDEADNSKKMFLNV.

Residues 1 to 16 form the signal peptide; it reads MLLLLLLLKISTFVDS. Topologically, residues 17–409 are extracellular; the sequence is FQIGHLEFEN…YDNNLCSDFH (393 aa). N-linked (GlcNAc...) asparagine glycosylation is found at Asn28, Asn224, Asn301, Asn308, and Asn373. A helical transmembrane segment spans residues 410–430; it reads VFMIAAIVFSILLIPMAIAFY. Residues 431-1034 are Cytoplasmic-facing; that stretch reads LQRKEHLIQQ…DNSKKMFLNV (604 aa). Residues 464 to 749 form the Protein kinase domain; it reads RVSTISTARA…KITDAVNREF (286 aa). ATP contacts are provided by residues 470–478 and Lys497; that span reads TARASYSSI. A coiled-coil region spans residues 758–785; sequence IDQMIEMIDEYSANLEQIVAERTRELEQ. Positions 821–951 constitute a Guanylate cyclase domain; sequence TLLVVDVCQF…DTVNMACRMA (131 aa).

This sequence belongs to the adenylyl cyclase class-4/guanylyl cyclase family. In terms of tissue distribution, expressed in AQR, PQR and URX sensory neurons.

The protein localises to the cell membrane. The enzyme catalyses GTP = 3',5'-cyclic GMP + diphosphate. Functionally, guanylate cyclase involved in the production of the second messenger cGMP. This Caenorhabditis elegans protein is Receptor-type guanylate cyclase gcy-25.